A 318-amino-acid polypeptide reads, in one-letter code: Olfactory receptor 52D1 (318 aa).

The Extracellular portion of the chain corresponds to 1-28 (MSDSNLSDNHLPDTFFLTGIPGLEAAHF). An N-linked (GlcNAc...) asparagine glycan is attached at asparagine 5. A helical membrane pass occupies residues 29 to 49 (WIAIPFCAMYLVALVGNAALI). Topologically, residues 50–57 (LVIAMDNA) are cytoplasmic. The chain crosses the membrane as a helical span at residues 58–78 (LHAPMYLFLCLLSLTDLALSS). Residues 79 to 102 (TTVPKMLAILWLHAGEISFGGCLA) are Extracellular-facing. Cysteines 100 and 192 form a disulfide. A helical transmembrane segment spans residues 103 to 123 (QMFCVHSIYALESSILLAMAF). The Cytoplasmic portion of the chain corresponds to 124–142 (DRYVAICNPLRYTTILNHA). The chain crosses the membrane as a helical span at residues 143-163 (VIGRIGFVGLFRSVAIVSPFI). The Extracellular segment spans residues 164-199 (FLLRRLPYCGHRVMTHTYCEHMGIARLACANITVNI). The helical transmembrane segment at 200–220 (VYGLTVALLAMGLDSILIAIS) threads the bilayer. Over 221-240 (YGFILHAVFHLPSHDAQHKA) the chain is Cytoplasmic. A helical transmembrane segment spans residues 241-261 (LSTCGSHIGIILVFYIPAFFS). The Extracellular segment spans residues 262 to 277 (FLTHRFGHHEVPKHVH). The helical transmembrane segment at 278-298 (IFLANLYVLVPPVLNPILYGA) threads the bilayer. The Cytoplasmic portion of the chain corresponds to 299-318 (RTKEIRSRLLKLLHLGKTSI).

The protein belongs to the G-protein coupled receptor 1 family.

It is found in the cell membrane. Odorant receptor. This Homo sapiens (Human) protein is Olfactory receptor 52D1 (OR52D1).